Here is a 360-residue protein sequence, read N- to C-terminus: Peptide chain release factor 1 (360 aa).

Gln-235 is modified (N5-methylglutamine). Positions 285-313 (KRQQAEASTRRNLLGSGDRSDRNRTYNFP) are disordered.

Belongs to the prokaryotic/mitochondrial release factor family. Methylated by PrmC. Methylation increases the termination efficiency of RF1.

Its subcellular location is the cytoplasm. In terms of biological role, peptide chain release factor 1 directs the termination of translation in response to the peptide chain termination codons UAG and UAA. This Klebsiella pneumoniae (strain 342) protein is Peptide chain release factor 1.